The primary structure comprises 185 residues: Ribosome-recycling factor (185 aa).

Belongs to the RRF family.

Its subcellular location is the cytoplasm. In terms of biological role, responsible for the release of ribosomes from messenger RNA at the termination of protein biosynthesis. May increase the efficiency of translation by recycling ribosomes from one round of translation to another. The polypeptide is Ribosome-recycling factor (Kocuria rhizophila (strain ATCC 9341 / DSM 348 / NBRC 103217 / DC2201)).